The following is a 426-amino-acid chain: Cytochrome b-c1 complex subunit 2, mitochondrial (426 aa).

The transit peptide at 1 to 30 directs the protein to the mitochondrion; it reads MKSFTRNLRRFQTPRRNLHGISYTPKKVEG.

This sequence belongs to the peptidase M16 family. UQCRC2/QCR2 subfamily. In terms of assembly, component of the ubiquinol-cytochrome c oxidoreductase (cytochrome b-c1 complex, complex III, CIII), a multisubunit enzyme composed of 3 respiratory subunits cytochrome b, cytochrome c1 and Rieske protein, 2 core protein subunits, and additional low-molecular weight protein subunits. The complex exists as an obligatory dimer and forms supercomplexes (SCs) in the inner mitochondrial membrane with cytochrome c oxidase (complex IV, CIV).

It is found in the mitochondrion inner membrane. Functionally, component of the ubiquinol-cytochrome c oxidoreductase, a multisubunit transmembrane complex that is part of the mitochondrial electron transport chain which drives oxidative phosphorylation. The respiratory chain contains 3 multisubunit complexes succinate dehydrogenase (complex II, CII), ubiquinol-cytochrome c oxidoreductase (cytochrome b-c1 complex, complex III, CIII) and cytochrome c oxidase (complex IV, CIV), that cooperate to transfer electrons derived from NADH and succinate to molecular oxygen, creating an electrochemical gradient over the inner membrane that drives transmembrane transport and the ATP synthase. The cytochrome b-c1 complex catalyzes electron transfer from ubiquinol to cytochrome c, linking this redox reaction to translocation of protons across the mitochondrial inner membrane, with protons being carried across the membrane as hydrogens on the quinol. In the process called Q cycle, 2 protons are consumed from the matrix, 4 protons are released into the intermembrane space and 2 electrons are passed to cytochrome c. The chain is Cytochrome b-c1 complex subunit 2, mitochondrial (qcr2) from Schizosaccharomyces pombe (strain 972 / ATCC 24843) (Fission yeast).